A 136-amino-acid chain; its full sequence is Small cardioactive peptides (136 aa).

Residues 1–24 form the signal peptide; it reads METSVSRVTVSLTLLVLIICSADA. Methionine amide is present on residues M33 and M46. A propeptide spans 49–135 (carboxy-terminal peptide); it reads SQMKTETGTD…VLSKLKSLLQ (87 aa).

It belongs to the SCP family. In terms of processing, contains three disulfide bonds. As to expression, highly expressed in the buccal ganglion.

It localises to the secreted. Functionally, involved in the stimulation of contractile activity in the gut, the increase of the amplitude of the heart beat, and enhancement of the contractile response of the radula closer muscle. The protein is Small cardioactive peptides of Aplysia californica (California sea hare).